Reading from the N-terminus, the 212-residue chain is uncharacterized protein (212 aa).

2 consecutive transmembrane segments (helical) span residues 54–74 (LCFA…GYAG) and 79–99 (WIIC…ALLL).

It is found in the cell membrane. This is an uncharacterized protein from Chlamydia pneumoniae (Chlamydophila pneumoniae).